Here is a 374-residue protein sequence, read N- to C-terminus: Chaperone protein DnaJ (374 aa).

The J domain occupies 5-70 (DYYEVLGVNL…RKRASYDQFG (66 aa)). The CR-type zinc finger occupies 133–210 (GLSRTIKVPT…CHGQGRQQQT (78 aa)). Residues Cys-146, Cys-149, Cys-162, Cys-165, Cys-184, Cys-187, Cys-198, and Cys-201 each contribute to the Zn(2+) site. CXXCXGXG motif repeat units follow at residues 146–153 (CKTCNGSG), 162–169 (CPRCNGSG), 184–191 (CSVCRGRG), and 198–205 (CTDCHGQG).

This sequence belongs to the DnaJ family. Homodimer. Requires Zn(2+) as cofactor.

It is found in the cytoplasm. Participates actively in the response to hyperosmotic and heat shock by preventing the aggregation of stress-denatured proteins and by disaggregating proteins, also in an autonomous, DnaK-independent fashion. Unfolded proteins bind initially to DnaJ; upon interaction with the DnaJ-bound protein, DnaK hydrolyzes its bound ATP, resulting in the formation of a stable complex. GrpE releases ADP from DnaK; ATP binding to DnaK triggers the release of the substrate protein, thus completing the reaction cycle. Several rounds of ATP-dependent interactions between DnaJ, DnaK and GrpE are required for fully efficient folding. Also involved, together with DnaK and GrpE, in the DNA replication of plasmids through activation of initiation proteins. The sequence is that of Chaperone protein DnaJ from Coxiella burnetii (strain RSA 493 / Nine Mile phase I).